A 1068-amino-acid polypeptide reads, in one-letter code: MPRRTDLHRILVIGSGPILIGQAAEFDYAGTQACLALKEEGYEVILVNSNPATIMTDRDVADKVYIEPITLEFVSSILRRERPDAIVPTLGGQTGLNMATELAKSGIPDELGIELLGTKLSAIEKAEDRDLFKQLMDELGQPVPASEVVHTVDEAVKVGNTIGYPLIVRPAYTLGGTGGGMCCDEAELVRIVGKGLELSPVTECLIEQSIAGFKEIEYEMMRDGADNTMVVCTMENFDPVGVHTGDSIVFAPTQTLTDVEHEMLRDASIEIVRTLGIEGGCNVQLALDPNSFQYYVIEVNPRVSRSSALASKATGYPIAKIAAKIAVGLTLDEIRNPVTGTTWSMFEPMLDYVVAKIPRWPFDKFAQADRRLGTQMKATGEVMALGRTIEESLLKAVRSLEIGVDHLALREVADLPDDILEERLLHARDDRLFCLTEAIRRGRTVQELHEQTRIDVFFLDKVAHILEIEERLRACPDDSEALWIAKRNGFSDPAIARIWGETPDDVRVRRVDNGIVPVYKMVDTCAGEFESSTPYFYSTYEMENESKKSQRPSVLVLGSGPIRIGQGIEFDYATVHSVKAIQAAGYEAIIMNSNPETVSTDFSISDKLYFEPLTFEDVMNVIDLEQPDGVIVQFGGQTAINLAGPLSAAGVPILGTQVADLDRAEDREGFESLLAELGIPQAPGGTARSSEEAFAVAEELGYPVLVRPSYVIGGRAMAIVTSAEELKRYMRDAVHASPDKPVLVDRYLNGLECEVDAICDGTDVLIPGIMEHIERAGVHSGDSMAVYPPQRMSQQVADRIIEVTTKLARGLKTKGILNIQFVVANDPATGEETVYVIEANPRASRTVPFLSKVTGVSMAEVATRIILGETLADLGLRPGLLPFSKRIHVKSPVFSFSKLDLVDSHLGPEMKSTGEVMGSDDTVEKALYKVFEAANLHVPEYGKILITVTDDAKPEALQLARRFDRIGFQLVGTMGTARFFDEGGLRIDVAEKIGSGEAGSTESVLDLISRNGCDAVINVMGNGQDTIIDGKQIRREAIARGIPLFTSLDTAAAICRVMESRVFSTESI.

Residues 1-401 (MPRRTDLHRI…SLLKAVRSLE (401 aa)) form a carboxyphosphate synthetic domain region. Arginine 129, arginine 169, glycine 175, glycine 176, glutamine 208, isoleucine 210, glutamate 215, glycine 241, valine 242, histidine 243, glutamine 284, and glutamate 298 together coordinate ATP. Residues 133 to 327 (KQLMDELGQP…IAKIAAKIAV (195 aa)) enclose the ATP-grasp 1 domain. Mg(2+) is bound by residues glutamine 284, glutamate 298, and asparagine 300. Mn(2+)-binding residues include glutamine 284, glutamate 298, and asparagine 300. An oligomerization domain region spans residues 402 to 546 (IGVDHLALRE…YSTYEMENES (145 aa)). Residues 547–935 (KKSQRPSVLV…ALYKVFEAAN (389 aa)) form a carbamoyl phosphate synthetic domain region. An ATP-grasp 2 domain is found at 671–867 (ESLLAELGIP…MAEVATRIIL (197 aa)). ATP contacts are provided by arginine 707, arginine 746, leucine 748, glutamate 752, glycine 777, valine 778, histidine 779, serine 780, glutamine 820, and glutamate 838. Residues glutamine 820, glutamate 838, and asparagine 840 each contribute to the Mg(2+) site. Positions 820, 838, and 840 each coordinate Mn(2+). In terms of domain architecture, MGS-like spans 936–1068 (LHVPEYGKIL…ESRVFSTESI (133 aa)). The allosteric domain stretch occupies residues 936 to 1068 (LHVPEYGKIL…ESRVFSTESI (133 aa)).

Belongs to the CarB family. In terms of assembly, composed of two chains; the small (or glutamine) chain promotes the hydrolysis of glutamine to ammonia, which is used by the large (or ammonia) chain to synthesize carbamoyl phosphate. Tetramer of heterodimers (alpha,beta)4. Requires Mg(2+) as cofactor. Mn(2+) serves as cofactor.

It carries out the reaction hydrogencarbonate + L-glutamine + 2 ATP + H2O = carbamoyl phosphate + L-glutamate + 2 ADP + phosphate + 2 H(+). It catalyses the reaction hydrogencarbonate + NH4(+) + 2 ATP = carbamoyl phosphate + 2 ADP + phosphate + 2 H(+). The protein operates within amino-acid biosynthesis; L-arginine biosynthesis; carbamoyl phosphate from bicarbonate: step 1/1. It participates in pyrimidine metabolism; UMP biosynthesis via de novo pathway; (S)-dihydroorotate from bicarbonate: step 1/3. Functionally, large subunit of the glutamine-dependent carbamoyl phosphate synthetase (CPSase). CPSase catalyzes the formation of carbamoyl phosphate from the ammonia moiety of glutamine, carbonate, and phosphate donated by ATP, constituting the first step of 2 biosynthetic pathways, one leading to arginine and/or urea and the other to pyrimidine nucleotides. The large subunit (synthetase) binds the substrates ammonia (free or transferred from glutamine from the small subunit), hydrogencarbonate and ATP and carries out an ATP-coupled ligase reaction, activating hydrogencarbonate by forming carboxy phosphate which reacts with ammonia to form carbamoyl phosphate. This chain is Carbamoyl phosphate synthase large chain, found in Cutibacterium acnes (strain DSM 16379 / KPA171202) (Propionibacterium acnes).